A 150-amino-acid chain; its full sequence is Large ribosomal subunit protein bL9 (150 aa).

Belongs to the bacterial ribosomal protein bL9 family.

Binds to the 23S rRNA. The protein is Large ribosomal subunit protein bL9 of Mycoplasmopsis pulmonis (strain UAB CTIP) (Mycoplasma pulmonis).